The chain runs to 355 residues: Peptide chain release factor 1 (355 aa).

Gln233 carries the post-translational modification N5-methylglutamine. Basic and acidic residues predominate over residues 281-293 (RRNKEQERADSRR). The interval 281-308 (RRNKEQERADSRRGQIGSGDRSERIRTY) is disordered.

It belongs to the prokaryotic/mitochondrial release factor family. Post-translationally, methylated by PrmC. Methylation increases the termination efficiency of RF1.

The protein resides in the cytoplasm. Functionally, peptide chain release factor 1 directs the termination of translation in response to the peptide chain termination codons UAG and UAA. The polypeptide is Peptide chain release factor 1 (Rickettsia akari (strain Hartford)).